The sequence spans 155 residues: Protein-export protein SecB 1 (155 aa).

It belongs to the SecB family. Homotetramer, a dimer of dimers. One homotetramer interacts with 1 SecA dimer.

It is found in the cytoplasm. One of the proteins required for the normal export of preproteins out of the cell cytoplasm. It is a molecular chaperone that binds to a subset of precursor proteins, maintaining them in a translocation-competent state. It also specifically binds to its receptor SecA. In Polaromonas naphthalenivorans (strain CJ2), this protein is Protein-export protein SecB 1.